Reading from the N-terminus, the 395-residue chain is Flagellin D (395 aa).

Belongs to the bacterial flagellin family.

It is found in the secreted. Its subcellular location is the bacterial flagellum. Flagellin is the subunit protein which polymerizes to form the filaments of bacterial flagella. The polypeptide is Flagellin D (flaD) (Rhizobium meliloti (Ensifer meliloti)).